Reading from the N-terminus, the 423-residue chain is Serine--tRNA ligase (423 aa).

Residue 231–233 (TGE) participates in L-serine binding. Position 262–264 (262–264 (RSE)) interacts with ATP. Glutamate 285 serves as a coordination point for L-serine. Residue 349–352 (EISS) coordinates ATP. Serine 385 provides a ligand contact to L-serine.

This sequence belongs to the class-II aminoacyl-tRNA synthetase family. Type-1 seryl-tRNA synthetase subfamily. In terms of assembly, homodimer. The tRNA molecule binds across the dimer.

The protein localises to the cytoplasm. It carries out the reaction tRNA(Ser) + L-serine + ATP = L-seryl-tRNA(Ser) + AMP + diphosphate + H(+). It catalyses the reaction tRNA(Sec) + L-serine + ATP = L-seryl-tRNA(Sec) + AMP + diphosphate + H(+). The protein operates within aminoacyl-tRNA biosynthesis; selenocysteinyl-tRNA(Sec) biosynthesis; L-seryl-tRNA(Sec) from L-serine and tRNA(Sec): step 1/1. Its function is as follows. Catalyzes the attachment of serine to tRNA(Ser). Is also able to aminoacylate tRNA(Sec) with serine, to form the misacylated tRNA L-seryl-tRNA(Sec), which will be further converted into selenocysteinyl-tRNA(Sec). The chain is Serine--tRNA ligase from Coxiella burnetii (strain CbuG_Q212) (Coxiella burnetii (strain Q212)).